We begin with the raw amino-acid sequence, 88 residues long: Small ribosomal subunit protein bS16c (88 aa).

The protein belongs to the bacterial ribosomal protein bS16 family.

It is found in the plastid. The protein resides in the chloroplast. This Gossypium barbadense (Sea Island cotton) protein is Small ribosomal subunit protein bS16c.